A 360-amino-acid chain; its full sequence is Peptide chain release factor 1 (360 aa).

Glutamine 235 bears the N5-methylglutamine mark. Over residues alanine 291 to arginine 308 the composition is skewed to basic and acidic residues. Residues alanine 291 to phenylalanine 312 form a disordered region.

The protein belongs to the prokaryotic/mitochondrial release factor family. Post-translationally, methylated by PrmC. Methylation increases the termination efficiency of RF1.

The protein localises to the cytoplasm. In terms of biological role, peptide chain release factor 1 directs the termination of translation in response to the peptide chain termination codons UAG and UAA. The polypeptide is Peptide chain release factor 1 (Yersinia pseudotuberculosis serotype O:1b (strain IP 31758)).